A 288-amino-acid chain; its full sequence is MDPALLRDRELFKKRALTTPAVEKRPSASSESSKKKRAKLELSSTSGSKPSSDGSNGSFNLKSLSGSSGYKFGVLAKIVNYMKTRHQRGDTYPLTLEEILDETQHLDIGIKQKQWLMSEALVNNPKIEIIDGKYAFKPKYNLKDKKALLRLLDKHDQRGLGGILLEDIEEGLPNAQKAIKALGDQIVFVTRPDKKKILFYNDKSCQFTVDEEFQKLWRSVPVDSMDDEKIEEYLKRQGISSMQESGPKKIIPVQKRKKATSQRRRFKTHNDHLAGVLKDYTDVASGKP.

A disordered region spans residues A16 to N56. Over residues E41–N56 the composition is skewed to low complexity. Positions S63 to K143 form a DNA-binding region, TFIIE beta.

It belongs to the TFIIE beta subunit family. In terms of assembly, tetramer of two alpha and two beta chains.

Its subcellular location is the nucleus. Its function is as follows. Recruits TFIIH to the initiation complex and stimulates the RNA polymerase II C-terminal domain kinase and DNA-dependent ATPase activities of TFIIH. Both TFIIH and TFIIE are required for promoter clearance by RNA polymerase. The protein is General transcription factor IIE subunit 2 (gtf2e2) of Xenopus laevis (African clawed frog).